The sequence spans 160 residues: Transcription elongation factor GreA (160 aa).

The protein belongs to the GreA/GreB family.

Necessary for efficient RNA polymerase transcription elongation past template-encoded arresting sites. The arresting sites in DNA have the property of trapping a certain fraction of elongating RNA polymerases that pass through, resulting in locked ternary complexes. Cleavage of the nascent transcript by cleavage factors such as GreA or GreB allows the resumption of elongation from the new 3'terminus. GreA releases sequences of 2 to 3 nucleotides. This Francisella philomiragia subsp. philomiragia (strain ATCC 25017 / CCUG 19701 / FSC 153 / O#319-036) protein is Transcription elongation factor GreA.